The primary structure comprises 205 residues: Dihydrofolate reductase (205 aa).

The DHFR domain maps to 1 to 201 (MLALVVALAS…TSFKMFLYTK (201 aa)). Residues Ala-7 and 13–19 (GIGNANA) contribute to the NADP(+) site. A substrate-binding site is contributed by 29–34 (DMAWFR). Residue 62 to 64 (RRT) coordinates NADP(+). Arg-78 contacts substrate. NADP(+) contacts are provided by residues 84 to 86 (SRG) and 118 to 125 (GGRDVYSL).

This sequence belongs to the dihydrofolate reductase family.

It carries out the reaction (6S)-5,6,7,8-tetrahydrofolate + NADP(+) = 7,8-dihydrofolate + NADPH + H(+). The protein operates within cofactor biosynthesis; tetrahydrofolate biosynthesis; 5,6,7,8-tetrahydrofolate from 7,8-dihydrofolate: step 1/1. Its function is as follows. Key enzyme in folate metabolism. Catalyzes an essential reaction for de novo glycine and purine synthesis, and for DNA precursor synthesis. The polypeptide is Dihydrofolate reductase (DHFR-1) (Encephalitozoon cuniculi (strain GB-M1) (Microsporidian parasite)).